The following is a 468-amino-acid chain: 3-isopropylmalate dehydratase large subunit (468 aa).

[4Fe-4S] cluster-binding residues include Cys349, Cys409, and Cys412.

Belongs to the aconitase/IPM isomerase family. LeuC type 1 subfamily. In terms of assembly, heterodimer of LeuC and LeuD. It depends on [4Fe-4S] cluster as a cofactor.

It catalyses the reaction (2R,3S)-3-isopropylmalate = (2S)-2-isopropylmalate. It participates in amino-acid biosynthesis; L-leucine biosynthesis; L-leucine from 3-methyl-2-oxobutanoate: step 2/4. Catalyzes the isomerization between 2-isopropylmalate and 3-isopropylmalate, via the formation of 2-isopropylmaleate. This chain is 3-isopropylmalate dehydratase large subunit, found in Roseobacter denitrificans (strain ATCC 33942 / OCh 114) (Erythrobacter sp. (strain OCh 114)).